A 248-amino-acid chain; its full sequence is Putative eukaryotic initiation factor 4A-like protein (248 aa).

The short motif at 14–42 (VGFASLGLNEQLINNIKRYGITKLTPFQM) is the Q motif element. A Helicase ATP-binding domain is found at 45–239 (IKEIKENSNV…NTFIKIPKII (195 aa)). Residue 58–65 (SIEGTGRT) coordinates ATP. Positions 185–188 (DELD) match the DEAD box motif.

This sequence belongs to the DEAD box helicase family. eIF4A subfamily.

The sequence is that of Putative eukaryotic initiation factor 4A-like protein from Dictyostelium discoideum (Social amoeba).